The chain runs to 51 residues: Large ribosomal subunit protein bL33 (51 aa).

This sequence belongs to the bacterial ribosomal protein bL33 family.

The sequence is that of Large ribosomal subunit protein bL33 from Psychrobacter sp. (strain PRwf-1).